The sequence spans 174 residues: MAEASEFNFNLRRKSRAVTASRRVKEEVKEKQKMDDSKSQVVDVDSVSVYSHESSRSNYSDAYEKLKREPVVEESNDARYRTFEFSEDEETFKPANKMSDKSQRNSKSKHTEGLECSDTVLEKISELTLEIEKVKQMNQPITVDAAFNMTLRNVDNLTTRQKQALVNSIINSMN.

2 disordered regions span residues 18–40 (VTASRRVKEEVKEKQKMDDSKSQ) and 86–114 (SEDEETFKPANKMSDKSQRNSKSKHTEGL). 2 stretches are compositionally biased toward basic and acidic residues: residues 23-38 (RVKEEVKEKQKMDDSK) and 98-113 (MSDKSQRNSKSKHTEG).

This sequence belongs to the rotavirus NSP5 family. As to quaternary structure, homodimer. Interacts with VP1. Interacts with VP2. Interacts with NSP2 and NSP6. In terms of processing, O-glycosylated.

It localises to the host cytoplasm. In terms of biological role, plays an essential role in the viral genome replication. Participates, together with NSP2, in the formation of viral factories (viroplasms) which are large inclusions in the host cytoplasm where replication intermediates are assembled and viral RNA replication takes place. Orchestrates the recruitment of viroplasmic proteins such as capsid proteins to these factories. The sequence is that of Non-structural protein 5 from Rotavirus B (isolate RVB/Rat/United States/IDIR/1984/G1P[X]) (RV-B).